The chain runs to 1887 residues: Protein TIC 214 (1887 aa).

The next 6 helical transmembrane spans lie at 18 to 38 (IINS…FSIG), 64 to 84 (FITG…HLAL), 87 to 107 (PHTI…WNNH), 124 to 144 (LSIQ…HFIL), 172 to 192 (VGWL…LVWI), and 221 to 241 (IFSI…PSPI). 3 disordered regions span residues 248 to 300 (EASK…EGWD), 786 to 805 (EEQT…DNKR), and 1569 to 1603 (LPSN…NLSP). The span at 256–268 (VESEEERDVEIET) shows a compositional bias: acidic residues. Residues 775 to 816 (KEREFKILESREEQTKREEKKEKDKKEDNKRKEQARIAIEEA) adopt a coiled-coil conformation. Positions 1578 to 1597 (RSQETKEPPSQRERGSDIEN) are enriched in basic and acidic residues.

Belongs to the TIC214 family. As to quaternary structure, part of the Tic complex.

It localises to the plastid. It is found in the chloroplast inner membrane. Involved in protein precursor import into chloroplasts. May be part of an intermediate translocation complex acting as a protein-conducting channel at the inner envelope. The protein is Protein TIC 214 of Solanum bulbocastanum (Wild potato).